Consider the following 1024-residue polypeptide: Eukaryotic translation initiation factor 3 subunit A (1024 aa).

A PCI domain is found at 331 to 508 (VISSNAPGTG…QAITFQDDVF (178 aa)). 2 coiled-coil regions span residues 575–717 (AAED…REEA) and 777–889 (KRRG…RRSR). Basic and acidic residues-rich tracts occupy residues 797–866 (KERR…ERRA) and 873–886 (DKQRQREEEAEANR). Disordered regions lie at residues 797–973 (KERR…GAYR) and 1001–1024 (AAAAESDGFTEVKKNVYRPPGRRA). Low complexity-rich tracts occupy residues 890 to 906 (AAGTGAAPAQELAAADA) and 946 to 971 (KEAAGGNATAAPSAPAAAPAPASSGA).

Belongs to the eIF-3 subunit A family. In terms of assembly, component of the eukaryotic translation initiation factor 3 (eIF-3) complex.

Its subcellular location is the cytoplasm. Its function is as follows. RNA-binding component of the eukaryotic translation initiation factor 3 (eIF-3) complex, which is involved in protein synthesis of a specialized repertoire of mRNAs and, together with other initiation factors, stimulates binding of mRNA and methionyl-tRNAi to the 40S ribosome. The eIF-3 complex specifically targets and initiates translation of a subset of mRNAs involved in cell proliferation. This is Eukaryotic translation initiation factor 3 subunit A from Mycosarcoma maydis (Corn smut fungus).